The primary structure comprises 451 residues: Rab GDP-dissociation inhibitor (451 aa).

Interaction with YPT1 regions lie at residues arginine 106–glutamine 112 and tyrosine 234–leucine 259.

The protein belongs to the Rab GDI family. As to quaternary structure, interacts with the GDP-bound form of Rab GTPase YPT1. Interacts with YPT10.

Its subcellular location is the cytoplasm. In terms of biological role, regulates the GDP/GTP exchange reaction of SEC4 by inhibiting the dissociation of GDP from it, and the subsequent binding of GTP to SEC4. Plays an essential role in the yeast secretory pathway. Extracts GDP-bound YPT7 from vacuolar membranes, antagonizing vacuolar membrane fusion. This Saccharomyces cerevisiae (strain ATCC 204508 / S288c) (Baker's yeast) protein is Rab GDP-dissociation inhibitor (GDI1).